Here is a 923-residue protein sequence, read N- to C-terminus: MERGLPLLCATLALALALAGAFRSDKCGGTIKIENPGYLTSPGYPHSYHPSEKCEWLIQAPEPYQRIMINFNPHFDLEDRDCKYDYVEVIDGENEGGRLWGKFCGKIAPSPVVSSGPFLFIKFVSDYETHGAGFSIRYEIFKRGPECSQNYTAPTGVIKSPGFPEKYPNSLECTYIIFAPKMSEIILEFESFDLEQDSNPPGGMFCRYDRLEIWDGFPEVGPHIGRYCGQKTPGRIRSSSGVLSMVFYTDSAIAKEGFSANYSVLQSSISEDFKCMEALGMESGEIHSDQITASSQYGTNWSVERSRLNYPENGWTPGEDSYKEWIQVDLGLLRFVTAVGTQGAISKETKKKYYVKTYRVDISSNGEDWISLKEGNKAIIFQGNTNPTDVVLGVFSKPLITRFVRIKPVSWETGISMRFEVYGCKITDYPCSGMLGMVSGLISDSQITASNQADRNWMPENIRLVTSRTGWALPPSPHPYTNEWLQVDLGDEKIVRGVIIQGGKHRENKVFMRKFKIAYSNNGSDWKTIMDDSKRKAKSFEGNNNYDTPELRTFSPLSTRFIRIYPERATHSGLGLRMELLGCEVEAPTAGPTTPNGNPVDECDDDQANCHSGTGDDFQLTGGTTVLATEKPTIIDSTIQSEFPTYGFNCEFGWGSHKTFCHWEHDSHAQLRWSVLTSKTGPIQDHTGDGNFIYSQADENQKGKVARLVSPVVYSQSSAHCMTFWYHMSGSHVGTLRVKLRYQKPEEYDQLVWMVVGHQGDHWKEGRVLLHKSLKLYQVIFEGEIGKGNLGGIAVDDISINNHISQEDCAKPTDLDKKNTEIKIDETGSTPGYEGEGEGDKNISRKPGNVLKTLDPILITIIAMSALGVLLGAVCGVVLYCACWHNGMSERNLSALENYNFELVDGVKLKKDKLNPQSNYSEA.

Residues 1 to 21 (MERGLPLLCATLALALALAGA) form the signal peptide. Residues 22 to 856 (FRSDKCGGTI…PGNVLKTLDP (835 aa)) are Extracellular-facing. 3 cysteine pairs are disulfide-bonded: cysteine 27–cysteine 54, cysteine 82–cysteine 104, and cysteine 147–cysteine 173. CUB domains lie at 27–141 (CGGT…YEIF) and 147–265 (CSQN…YSVL). Residue asparagine 150 is glycosylated (N-linked (GlcNAc...) asparagine). Ca(2+) contacts are provided by glutamate 195, aspartate 209, and aspartate 250. Cysteines 206 and 228 form a disulfide. 3 N-linked (GlcNAc...) asparagine glycosylation sites follow: asparagine 261, asparagine 300, and asparagine 522. 2 disulfides stabilise this stretch: cysteine 275-cysteine 424 and cysteine 431-cysteine 583. F5/8 type C domains lie at 275–424 (CMEA…VYGC) and 431–583 (CSGM…LLGC). O-linked (Xyl...) (chondroitin sulfate) serine; alternate glycosylation occurs at serine 612. A glycan (O-linked (Xyl...) (heparan sulfate) serine; alternate) is linked at serine 612. The region spanning 645–811 (TYGFNCEFGW…NHISQEDCAK (167 aa)) is the MAM domain. Positions 820–845 (TEIKIDETGSTPGYEGEGEGDKNISR) are disordered. Serine 829 carries O-linked (Xyl...) (chondroitin sulfate) serine glycosylation. Residue asparagine 842 is glycosylated (N-linked (GlcNAc...) asparagine). Residues 857-879 (ILITIIAMSALGVLLGAVCGVVL) traverse the membrane as a helical segment. Residues 880 to 923 (YCACWHNGMSERNLSALENYNFELVDGVKLKKDKLNPQSNYSEA) are Cytoplasmic-facing. Serine 894 carries the post-translational modification Phosphoserine.

This sequence belongs to the neuropilin family. As to quaternary structure, homodimer, and heterodimer with NRP2. Binds PLXNB1. Interacts with FER. Interacts with VEGFA. Interacts with ABCB8/MITOSUR in mitochondria. In terms of tissue distribution, nervous system.

It is found in the mitochondrion membrane. Its subcellular location is the cell membrane. The protein resides in the cytoplasm. Functionally, receptor involved in the development of the cardiovascular system, in angiogenesis, in the formation of certain neuronal circuits and in organogenesis outside the nervous system. Mediates the chemorepulsant activity of semaphorins. Recognizes a C-end rule (CendR) motif R/KXXR/K on its ligands which causes cellular internalization and vascular leakage. Binds to semaphorin 3A (SEMA3A), the PLGF-2 isoform of PGF, the VEGF165 isoform of VEGFA and VEGFB. Coexpression with KDR results in increased VEGF165 binding to KDR as well as increased chemotaxis. Regulates VEGF-induced angiogenesis. Binding to VEGFA initiates a signaling pathway needed for motor neuron axon guidance and cell body migration, including for the caudal migration of facial motor neurons from rhombomere 4 to rhombomere 6 during embryonic development. Regulates mitochondrial iron transport via interaction with ABCB8/MITOSUR. The chain is Neuropilin-1 from Mus musculus (Mouse).